The following is a 510-amino-acid chain: Histidine ammonia-lyase (510 aa).

Positions 143–145 (ASG) form a cross-link, 5-imidazolinone (Ala-Gly). Ser-144 bears the 2,3-didehydroalanine (Ser) mark.

It belongs to the PAL/histidase family. Post-translationally, contains an active site 4-methylidene-imidazol-5-one (MIO), which is formed autocatalytically by cyclization and dehydration of residues Ala-Ser-Gly.

The protein localises to the cytoplasm. It catalyses the reaction L-histidine = trans-urocanate + NH4(+). Its pathway is amino-acid degradation; L-histidine degradation into L-glutamate; N-formimidoyl-L-glutamate from L-histidine: step 1/3. This Photobacterium profundum (strain SS9) protein is Histidine ammonia-lyase.